A 294-amino-acid polypeptide reads, in one-letter code: Probable 2-(5''-triphosphoribosyl)-3'-dephosphocoenzyme-A synthase (294 aa).

The protein belongs to the CitG/MdcB family.

The enzyme catalyses 3'-dephospho-CoA + ATP = 2'-(5''-triphospho-alpha-D-ribosyl)-3'-dephospho-CoA + adenine. This is Probable 2-(5''-triphosphoribosyl)-3'-dephosphocoenzyme-A synthase from Streptococcus pyogenes serotype M18 (strain MGAS8232).